A 59-amino-acid polypeptide reads, in one-letter code: Large ribosomal subunit protein uL30 (59 aa).

It belongs to the universal ribosomal protein uL30 family. Part of the 50S ribosomal subunit.

The polypeptide is Large ribosomal subunit protein uL30 (Desulforamulus reducens (strain ATCC BAA-1160 / DSM 100696 / MI-1) (Desulfotomaculum reducens)).